We begin with the raw amino-acid sequence, 128 residues long: Fluoride-specific ion channel FluC 2 (128 aa).

4 helical membrane-spanning segments follow: residues 13–35 (ALVA…AIAG), 40–59 (LAAN…EAAA), 71–93 (LLGT…TAGL), and 97–119 (WMAA…GRAI).

This sequence belongs to the fluoride channel Fluc/FEX (TC 1.A.43) family.

The protein localises to the cell membrane. The catalysed reaction is fluoride(in) = fluoride(out). Fluoride-specific ion channel. Important for reducing fluoride concentration in the cell, thus reducing its toxicity. This chain is Fluoride-specific ion channel FluC 2, found in Halobacterium salinarum (strain ATCC 700922 / JCM 11081 / NRC-1) (Halobacterium halobium).